The chain runs to 102 residues: NADH-quinone oxidoreductase subunit K (102 aa).

3 helical membrane-spanning segments follow: residues 6–26 (MEHG…GLLI), 30–50 (LLFI…AFVV), and 65–85 (ILVI…LLLL).

The protein belongs to the complex I subunit 4L family. NDH-1 is composed of 14 different subunits. Subunits NuoA, H, J, K, L, M, N constitute the membrane sector of the complex.

The protein resides in the cell inner membrane. The enzyme catalyses a quinone + NADH + 5 H(+)(in) = a quinol + NAD(+) + 4 H(+)(out). Its function is as follows. NDH-1 shuttles electrons from NADH, via FMN and iron-sulfur (Fe-S) centers, to quinones in the respiratory chain. The immediate electron acceptor for the enzyme in this species is believed to be ubiquinone. Couples the redox reaction to proton translocation (for every two electrons transferred, four hydrogen ions are translocated across the cytoplasmic membrane), and thus conserves the redox energy in a proton gradient. The polypeptide is NADH-quinone oxidoreductase subunit K (Aeromonas salmonicida (strain A449)).